Reading from the N-terminus, the 155-residue chain is uncharacterized protein (155 aa).

Positions 4-65 (IDEIDEIIVR…VVDTSFFGEF (62 aa)) constitute an HTH asnC-type domain. Residues 23–42 (LTELGKKVGLTASAVKNRIE) constitute a DNA-binding region (H-T-H motif).

This is an uncharacterized protein from Pyrococcus abyssi (strain GE5 / Orsay).